Reading from the N-terminus, the 338-residue chain is Phenylalanine--tRNA ligase alpha subunit (338 aa).

Position 253 (Glu253) interacts with Mg(2+).

It belongs to the class-II aminoacyl-tRNA synthetase family. Phe-tRNA synthetase alpha subunit type 1 subfamily. Tetramer of two alpha and two beta subunits. It depends on Mg(2+) as a cofactor.

It is found in the cytoplasm. It catalyses the reaction tRNA(Phe) + L-phenylalanine + ATP = L-phenylalanyl-tRNA(Phe) + AMP + diphosphate + H(+). This chain is Phenylalanine--tRNA ligase alpha subunit, found in Citrifermentans bemidjiense (strain ATCC BAA-1014 / DSM 16622 / JCM 12645 / Bem) (Geobacter bemidjiensis).